A 326-amino-acid polypeptide reads, in one-letter code: MKIPLAVILGPTGTGKTKLSLELAKYLPVEIVSVDSMQIYQGMDIGTAKPSLEDREKVPHHLIDIVLPDYFFTVAEFRERALKVIEEIYARRRFPLLVGGTPLYYKVLFGEFSIPHVPPDLEFRRKMKELAEKEGEYKLYEELKKIDPKTASKIHPRDLKRIIRALEVYYKVGKPISELAGEKKEDRFYISKIGLYMPRDLHYRILEERVDKMIEQGLVDEVRNLYLKGINENFVSMQGIGYKEILRYLRGELTLEESINLIKKRTKEFVKRQYTWFKKYKDIHWFDVSQYSLSQLAKLVYNTIINDWENQGYKYQNREGVNYFND.

10–17 serves as a coordination point for ATP; sequence GPTGTGKT. 12–17 provides a ligand contact to substrate; it reads TGTGKT. An interaction with substrate tRNA region spans residues 35-38; the sequence is DSMQ.

This sequence belongs to the IPP transferase family. Monomer. The cofactor is Mg(2+).

The catalysed reaction is adenosine(37) in tRNA + dimethylallyl diphosphate = N(6)-dimethylallyladenosine(37) in tRNA + diphosphate. In terms of biological role, catalyzes the transfer of a dimethylallyl group onto the adenine at position 37 in tRNAs that read codons beginning with uridine, leading to the formation of N6-(dimethylallyl)adenosine (i(6)A). In Dictyoglomus turgidum (strain DSM 6724 / Z-1310), this protein is tRNA dimethylallyltransferase.